The chain runs to 309 residues: Clotting factor G beta subunit (309 aa).

The signal sequence occupies residues 1-31 (MDISFLVFITLSMALFSSNVTGTSVTSRVRR). 4 disulfides stabilise this stretch: C38-C158, C74-C90, C205-C227, and C238-C268. One can recognise a Peptidase S1 domain in the interval 47–292 (IIGGGIATPH…YVNWLQEITF (246 aa)). The Charge relay system role is filled by H89. Residue N100 is glycosylated (N-linked (GlcNAc...) asparagine). D138 (charge relay system) is an active-site residue. N206 carries an N-linked (GlcNAc...) asparagine glycan. S242 (charge relay system) is an active-site residue.

The protein belongs to the peptidase S1 family. Clotting factor G is a heterodimer composed of two non-covalently associated subunits, alpha and beta. Upon activation, converted to a two-chain active form linked by a disulfide bond. Forms a covalent heterodimer with intracellular coagulation inhibitor 3/LICI-3. In terms of tissue distribution, expressed in the hemocytes (at protein level).

It catalyses the reaction Selective cleavage of 98-Arg-|-Ile-99 bond in Limulus proclotting enzyme to form active clotting enzyme.. Binding to (1-&gt;3)-beta-D-glucan to alpha subunit, induces autocatalysis and activation of beta subunit. Inhibited by intracellular coagulation inhibitor 3/LICI-3 and to a lesser extend by intracellular coagulation inhibitor 2/LICI-2. In terms of biological role, component of the heterodimer clotting factor G which may play a role in defense mechanisms against fungi. Initiates a (1-&gt;3)-beta-glucan-sensing clotting pathway whereby the alpha subunit binds to glucans containing (1-&gt;3)-beta linkages, which are components of the fungal cell wall, and the beta subunit catalyzes the activation of proclotting enzyme. The chain is Clotting factor G beta subunit from Tachypleus tridentatus (Japanese horseshoe crab).